A 517-amino-acid chain; its full sequence is MQRSDPPRPLLEMRGISKTFPAVRALAGVSLTVHPGEVHSLMGENGAGKSTLMKILSGAYQADPGGEILIDGRPISIDGPLAARDAGVAVIYQELCLAPNLSVAENIHVGRELRRGNGRRGTIDRAAMARGCQDVLERLGADFGPNTLVGTLSIAEQQLVEIARAVHTRARILVMDEPTTPLSSRETDNLFRLIRQLRAEGLAIIYISHRMAEIYELSDRVSVLRDGAYVGTLERDALSAERLVGMMVGRDISGFYKKAHAPYDPGNLLLSVRDIADGARVRGCSLDLHAGEVLGIAGLVGAGRTELARLIFGAEPRVRGEVTLAGKAFAAHSPREAIDAGLVYLTEDRKRQGLFLDMSVRENINISVCGRDARLGALDLARGAQRARDAIAALSIRVPHANVNVGALSGGNQQKVLLSRLLETKPRVLILDEPTRGVDIGAKSEIYRIINELARAGVGVIVISSELPEIIGVADRVLVMREGRIAGELGGRTDAPITQEAIIALATGSRTEASAAH.

2 consecutive ABC transporter domains span residues 11-251 (LEMR…VGRD) and 263-507 (YDPG…ALAT). An ATP-binding site is contributed by 43–50 (GENGAGKS).

This sequence belongs to the ABC transporter superfamily. Ribose importer (TC 3.A.1.2.1) family. In terms of assembly, the complex is composed of an ATP-binding protein (RbsA), two transmembrane proteins (RbsC) and a solute-binding protein (RbsB).

The protein localises to the cell inner membrane. The enzyme catalyses D-ribose(out) + ATP + H2O = D-ribose(in) + ADP + phosphate + H(+). In terms of biological role, part of the ABC transporter complex RbsABC involved in ribose import. Responsible for energy coupling to the transport system. The polypeptide is Ribose import ATP-binding protein RbsA (Burkholderia pseudomallei (strain K96243)).